The chain runs to 217 residues: Somatotropin (217 aa).

Positions 1–26 (MATGSRTSLLLAFTLLCLPQLKEAGA) are cleaved as a signal peptide. Position 44 (His44) interacts with Zn(2+). Cys79 and Cys191 are disulfide-bonded. Ser132 is subject to Phosphoserine. Position 200 (Glu200) interacts with Zn(2+). A disulfide bridge connects residues Cys208 and Cys215.

This sequence belongs to the somatotropin/prolactin family.

The protein resides in the secreted. Plays an important role in growth control. Its major role in stimulating body growth is to stimulate the liver and other tissues to secrete IGF1. It stimulates both the differentiation and proliferation of myoblasts. It also stimulates amino acid uptake and protein synthesis in muscle and other tissues. The chain is Somatotropin (GH1) from Saimiri boliviensis boliviensis (Bolivian squirrel monkey).